A 162-amino-acid polypeptide reads, in one-letter code: Protein archease (162 aa).

Ca(2+)-binding residues include Asp-34, Asp-161, and Ile-162.

Belongs to the archease family. Component of the tRNA-splicing ligase complex.

Functionally, component of the tRNA-splicing ligase complex required to facilitate the enzymatic turnover of catalytic subunit RTCB. Together with ddx1, acts by facilitating the guanylylation of RTCB, a key intermediate step in tRNA ligation. In Danio rerio (Zebrafish), this protein is Protein archease (zbtb8os).